The primary structure comprises 312 residues: Putative HTH-type transcriptional regulatory protein TV0294 (312 aa).

Residues Leu133–His186 enclose the HTH cro/C1-type domain. A DNA-binding region (H-T-H motif) is located at residues Ile144–Asn163.

The sequence is that of Putative HTH-type transcriptional regulatory protein TV0294 from Thermoplasma volcanium (strain ATCC 51530 / DSM 4299 / JCM 9571 / NBRC 15438 / GSS1).